Reading from the N-terminus, the 1041-residue chain is Importin-9 (1041 aa).

Residue Ala-2 is modified to N-acetylalanine. Positions 43 to 119 (AEEQIKVLEV…RELLPNGLRE (77 aa)) constitute an Importin N-terminal domain. The tract at residues 936–967 (QATPAEWNQDDSNDMWEDQEEEEEEEEDGLAG) is disordered. Over residues 943–964 (NQDDSNDMWEDQEEEEEEEEDG) the composition is skewed to acidic residues.

The protein belongs to the importin beta family. In terms of assembly, interacts with histones H2A, H2B, H3 and H4. The binding is coupled to RanGTP cycles. Interacts with AKIRIN2; promoting association with pre-assembled proteasomes. Associates with pre-assembled proteasomes; interaction is indirect and mediated via interaction with AKIRIN2. Interacts with PPP2R1A and PPP2R1B.

The protein resides in the cytoplasm. Its subcellular location is the nucleus. Its function is as follows. Nuclear transport receptor that mediates nuclear import of proteins, such as histones, proteasome and actin. Serves as receptor for nuclear localization signals (NLS) in cargo substrates. Is thought to mediate docking of the importin/substrate complex to the nuclear pore complex (NPC) through binding to nucleoporin and the complex is subsequently translocated through the pore by an energy requiring, Ran-dependent mechanism. At the nucleoplasmic side of the NPC, Ran binds to the importin, the importin/substrate complex dissociates and importin is re-exported from the nucleus to the cytoplasm where GTP hydrolysis releases Ran. The directionality of nuclear import is thought to be conferred by an asymmetric distribution of the GTP- and GDP-bound forms of Ran between the cytoplasm and nucleus. Mediates the import of pre-assembled proteasomes into the nucleus; AKIRIN2 acts as a molecular bridge between IPO9 and the proteasome complex. Mediates the nuclear import of histones H2A, H2B, H4 and H4. In addition to nuclear import, also acts as a chaperone for histones by preventing inappropriate non-nucleosomal interactions. Mediates the nuclear import of actin. In Mus musculus (Mouse), this protein is Importin-9.